The primary structure comprises 1028 residues: Formate dehydrogenase major subunit (1028 aa).

The tat-type signal signal peptide spans 1 to 33 (MQVSRRKFFKICAGGMAGTSAAMLGFAPANVLA). In terms of domain architecture, 4Fe-4S Mo/W bis-MGD-type spans 43–114 (AFESRNTCTY…GSLDYVNSES (72 aa)). Residues cysteine 50, cysteine 53, cysteine 57, and cysteine 100 each coordinate [4Fe-4S] cluster. Selenocysteine 204 is a non-standard amino acid (selenocysteine).

This sequence belongs to the prokaryotic molybdopterin-containing oxidoreductase family. As to quaternary structure, formate dehydrogenase is a membrane-bound complex, formed by subunits alpha, beta and gamma. It depends on Mo-bis(molybdopterin guanine dinucleotide) as a cofactor. [4Fe-4S] cluster is required as a cofactor. In terms of processing, predicted to be exported by the Tat system. The position of the signal peptide cleavage has not been experimentally proven.

It localises to the periplasm. The enzyme catalyses formate + NAD(+) = CO2 + NADH. Functionally, allows to use formate as major electron donor during anaerobic respiration. Subunit alpha possibly forms the active site. The sequence is that of Formate dehydrogenase major subunit (fdxG) from Haemophilus influenzae (strain ATCC 51907 / DSM 11121 / KW20 / Rd).